Consider the following 433-residue polypeptide: Coiled-coil domain-containing protein 71 (433 aa).

Ser125 is subject to Phosphoserine. Disordered stretches follow at residues Leu204 to Ala256, Gln284 to Val310, and Lys325 to Gln396. 2 stretches are compositionally biased toward basic residues: residues Lys216–Thr230 and Val288–Ala306. A coiled-coil region spans residues Lys260–Lys330.

The chain is Coiled-coil domain-containing protein 71 (Ccdc71) from Mus musculus (Mouse).